The chain runs to 655 residues: Probable alpha-galactosidase D (655 aa).

Positions 1–16 are cleaved as a signal peptide; sequence MASVIALSLLLPAAFA. 2 N-linked (GlcNAc...) asparagine glycosylation sites follow: N87 and N93. The cysteines at positions 126 and 153 are disulfide-linked. D151 serves as the catalytic Nucleophile. 196–200 serves as a coordination point for substrate; that stretch reads EWGID. The active-site Proton donor is D218. Residues N432, N482, N502, N540, and N579 are each glycosylated (N-linked (GlcNAc...) asparagine).

This sequence belongs to the glycosyl hydrolase 27 family.

It is found in the secreted. The catalysed reaction is Hydrolysis of terminal, non-reducing alpha-D-galactose residues in alpha-D-galactosides, including galactose oligosaccharides, galactomannans and galactolipids.. In terms of biological role, hydrolyzes a variety of simple alpha-D-galactoside as well as more complex molecules such as oligosaccharides and polysaccharides. This Aspergillus terreus (strain NIH 2624 / FGSC A1156) protein is Probable alpha-galactosidase D (aglD).